Reading from the N-terminus, the 315-residue chain is Protein sprouty homolog 2 (315 aa).

The span at 1–14 (MEARAQSGSGSQPL) shows a compositional bias: polar residues. Disordered regions lie at residues 1–38 (MEARAQSGSGSQPLLQAPRDSGRQRGEPDPRDALPQQV) and 51–140 (NTNE…GSSF). Residues 20 to 32 (DSGRQRGEPDPRD) are compositionally biased toward basic and acidic residues. Residues 88-100 (PRQPSRPQHPPAH) are compositionally biased toward pro residues. Residues 109–140 (RSISTVSSGSRSSTRTSTSSSSSEQRLLGSSF) show a composition bias toward low complexity. Residues 118–315 (SRSSTRTSTS…VPPRNFEKPT (198 aa)) form a required for interaction with CAV1 region. The 115-residue stretch at 177-291 (KCEDCGKCKC…CYDRVNRPGC (115 aa)) folds into the SPR domain. Residues 178–315 (CEDCGKCKCK…VPPRNFEKPT (138 aa)) are required for interaction with TESK1.

It belongs to the sprouty family. As to quaternary structure, forms heterodimers with SPRY1. Forms a tripartite complex containing GAB1, METTL13 and SPRY2. Within the complex interacts with METTL13. Interacts with RAF1. Interacts (via C-terminus) with TESK1 (via C-terminus); the interaction disrupts SPRY2 interaction with GRB2, potentially via disruption of SPRY2 serine dephosphorylation. Interacts with PPP2R1A/PP2A-A and PPP2CA/PP2A-C; the interaction with PPP2CA/PP2A-C is inhibited by interaction with TESK1, possibly by vesicular sequestration of SPRY2. Inhibition of the interaction with the serine/threonine-protein phosphatase 2A (PP2A) holoenzyme results in loss of PP2A-mediated dephosphorylation, resulting in the loss of SPRY2 interaction with GRB2. Interacts with GRB2. Interacts with CBL/C-CBL; the interaction inhibits CBL-mediated ubiquitination of EGFR. Interacts (via C-terminus) with CAV1 (via C-terminus). In terms of processing, cleaved at Pro-144 by the prolyl endopeptidase FAP (seprase) activity (in vitro).

Its subcellular location is the cytoplasm. It localises to the cytoskeleton. The protein localises to the cell projection. It is found in the ruffle membrane. Functionally, antagonist of fibroblast growth factor (FGF) pathways via inhibition of FGF-mediated phosphorylation of ERK1/2. Thereby acts as an antagonist of FGF-induced retinal lens fiber differentiation, may inhibit limb bud outgrowth and may negatively modulate respiratory organogenesis. Inhibits TGFB-induced epithelial-to-mesenchymal transition in retinal lens epithelial cells. Inhibits CBL/C-CBL-mediated EGFR ubiquitination. This is Protein sprouty homolog 2 (SPRY2) from Bos taurus (Bovine).